Consider the following 488-residue polypeptide: Homoserine O-acetyltransferase (488 aa).

Residues 47-355 (NAILVCHALT…SYGHDAFLLE (309 aa)) form the AB hydrolase-1 domain. Residue serine 153 is the Nucleophile of the active site. Residue arginine 222 coordinates substrate. Residues aspartate 316 and histidine 349 contribute to the active site. Substrate is bound at residue aspartate 350. CBS domains lie at 376–433 (MTEK…CSKL) and 437–488 (MTRD…RLIG).

The protein belongs to the AB hydrolase superfamily. MetX family. In terms of assembly, homodimer.

It localises to the cytoplasm. It catalyses the reaction L-homoserine + acetyl-CoA = O-acetyl-L-homoserine + CoA. It functions in the pathway amino-acid biosynthesis; L-methionine biosynthesis via de novo pathway; O-acetyl-L-homoserine from L-homoserine: step 1/1. In terms of biological role, transfers an acetyl group from acetyl-CoA to L-homoserine, forming acetyl-L-homoserine. The chain is Homoserine O-acetyltransferase from Methanococcoides burtonii (strain DSM 6242 / NBRC 107633 / OCM 468 / ACE-M).